We begin with the raw amino-acid sequence, 147 residues long: UPF0306 protein YPTB0506 (147 aa).

It belongs to the UPF0306 family.

The chain is UPF0306 protein YPTB0506 from Yersinia pseudotuberculosis serotype I (strain IP32953).